Reading from the N-terminus, the 381-residue chain is Acetylornithine deacetylase (381 aa).

Residue H79 coordinates Zn(2+). D81 is a catalytic residue. D111 is a Zn(2+) binding site. Residue E143 is part of the active site. Zn(2+)-binding residues include E144, E168, and H354.

This sequence belongs to the peptidase M20A family. ArgE subfamily. In terms of assembly, homodimer. Requires Zn(2+) as cofactor. Co(2+) is required as a cofactor. The cofactor is glutathione.

The protein resides in the cytoplasm. It catalyses the reaction N(2)-acetyl-L-ornithine + H2O = L-ornithine + acetate. It functions in the pathway amino-acid biosynthesis; L-arginine biosynthesis; L-ornithine from N(2)-acetyl-L-ornithine (linear): step 1/1. Functionally, catalyzes the hydrolysis of the amide bond of N(2)-acetylated L-amino acids. Cleaves the acetyl group from N-acetyl-L-ornithine to form L-ornithine, an intermediate in L-arginine biosynthesis pathway, and a branchpoint in the synthesis of polyamines. The sequence is that of Acetylornithine deacetylase from Buchnera aphidicola subsp. Acyrthosiphon pisum (strain 5A).